The chain runs to 113 residues: UPF0482 protein YnfB (113 aa).

An N-terminal signal peptide occupies residues 1–28 (MKITLSKRIGLLAILLPCALALSTTVHA).

The protein belongs to the UPF0482 family.

The sequence is that of UPF0482 protein YnfB from Escherichia coli O8 (strain IAI1).